The sequence spans 871 residues: DNA mismatch repair protein MutS (871 aa).

Position 630–637 (630–637 (GPNMGGKS)) interacts with ATP. A disordered region spans residues 830 to 849 (KEEPESKSASPVEAALAGIN).

The protein belongs to the DNA mismatch repair MutS family.

Its function is as follows. This protein is involved in the repair of mismatches in DNA. It is possible that it carries out the mismatch recognition step. This protein has a weak ATPase activity. The sequence is that of DNA mismatch repair protein MutS from Verminephrobacter eiseniae (strain EF01-2).